Consider the following 256-residue polypeptide: 6-carboxyhexanoate--CoA ligase (256 aa).

Belongs to the BioW family. In terms of assembly, homodimer. Requires Mg(2+) as cofactor.

It carries out the reaction heptanedioate + ATP + CoA = 6-carboxyhexanoyl-CoA + AMP + diphosphate. It functions in the pathway metabolic intermediate metabolism; pimeloyl-CoA biosynthesis; pimeloyl-CoA from pimelate: step 1/1. In terms of biological role, catalyzes the transformation of pimelate into pimeloyl-CoA with concomitant hydrolysis of ATP to AMP. This is 6-carboxyhexanoate--CoA ligase from Bacillus velezensis (strain DSM 23117 / BGSC 10A6 / LMG 26770 / FZB42) (Bacillus amyloliquefaciens subsp. plantarum).